The chain runs to 409 residues: Arginine deiminase (409 aa).

The active-site Amidino-cysteine intermediate is Cys399.

The protein belongs to the arginine deiminase family.

It is found in the cytoplasm. The enzyme catalyses L-arginine + H2O = L-citrulline + NH4(+). Its pathway is amino-acid degradation; L-arginine degradation via ADI pathway; carbamoyl phosphate from L-arginine: step 1/2. This chain is Arginine deiminase, found in Borreliella afzelii (strain PKo) (Borrelia afzelii).